The following is a 49-amino-acid chain: Beta-toxin Rc1 (49 aa).

3 cysteine pairs are disulfide-bonded: cysteine 15/cysteine 31, cysteine 22/cysteine 40, and cysteine 26/cysteine 42.

The protein belongs to the long (4 C-C) scorpion toxin superfamily. Sodium channel inhibitor family. Beta subfamily. Expressed by the venom gland.

The protein localises to the secreted. Functionally, beta toxins bind voltage-independently at site-4 of sodium channels (Nav) and shift the voltage of activation toward more negative potentials thereby affecting sodium channel activation and promoting spontaneous and repetitive firing. This toxin acts on X.laevis Nav1.6/SCN8A and insect BgNav1 channels, and also displays a small but significant effect on X.laevis Nav1.4/SCN4A channels. In mice induces nociception (licking and lifting behaviors) during the first 15 minutes after injection, and increases the release of TNF-alpha in J774.1 cells. The sequence is that of Beta-toxin Rc1 from Rhopalurus crassicauda (Scorpion).